A 156-amino-acid chain; its full sequence is Cyanate hydratase (156 aa).

Active-site residues include Arg-96, Glu-99, and Ser-122.

Belongs to the cyanase family.

It carries out the reaction cyanate + hydrogencarbonate + 3 H(+) = NH4(+) + 2 CO2. Catalyzes the reaction of cyanate with bicarbonate to produce ammonia and carbon dioxide. The protein is Cyanate hydratase of Mycobacteroides abscessus (strain ATCC 19977 / DSM 44196 / CCUG 20993 / CIP 104536 / JCM 13569 / NCTC 13031 / TMC 1543 / L948) (Mycobacterium abscessus).